The chain runs to 399 residues: Probable 2,3-bisphosphoglycerate-independent phosphoglycerate mutase (399 aa).

This sequence belongs to the BPG-independent phosphoglycerate mutase family. A-PGAM subfamily.

The enzyme catalyses (2R)-2-phosphoglycerate = (2R)-3-phosphoglycerate. It participates in carbohydrate degradation; glycolysis; pyruvate from D-glyceraldehyde 3-phosphate: step 3/5. Functionally, catalyzes the interconversion of 2-phosphoglycerate and 3-phosphoglycerate. This chain is Probable 2,3-bisphosphoglycerate-independent phosphoglycerate mutase, found in Geobacter sulfurreducens (strain ATCC 51573 / DSM 12127 / PCA).